Here is a 482-residue protein sequence, read N- to C-terminus: MELNELTIIQIREKLKNKEIDAPTLVDSIIKNIEEDNKRDDKIYAYLEIFKEEALEQAKKAQERINNGEDLPLLGVPLAIKDNLCYKDHLMTASSKMLEGYKAPYTAPTVQRLIDNGAIIIGRTNMDEFAMGGTTETSNYGVTRNPKNRAHVPGGSSGGSAAAVAANFAFGALGSDTGGSIRQPASFCGIVGVKPTYGRVPRLGCIAMASSLDQVGPLTKDVKDAALMTKIIAGFDPKESTTLNIPVPDYVAALDGNIKGMKIGLAKEYYDTDLIAADVKENVMDAIGKLKDQGAEIVDISLPNAKYGSRVYTAVMDVEVASNMGRYDGIRYGYHPKGDFNLDEYYYTSRSVGLAFETRARILFGTLMTGKRFFYSHYQHALKVRKLMQMDFDNAFKNVDVIVSPTSPVTAGLLGTRDQTDSALSFLADSYVSNINLVGLPAMSVPCGVDKNNMPIGIQFITKQFNEVDMFRMAYAHELANK.

Residues K81 and S156 each act as charge relay system in the active site. S180 functions as the Acyl-ester intermediate in the catalytic mechanism.

The protein belongs to the amidase family. GatA subfamily. As to quaternary structure, heterotrimer of A, B and C subunits.

It carries out the reaction L-glutamyl-tRNA(Gln) + L-glutamine + ATP + H2O = L-glutaminyl-tRNA(Gln) + L-glutamate + ADP + phosphate + H(+). Functionally, allows the formation of correctly charged Gln-tRNA(Gln) through the transamidation of misacylated Glu-tRNA(Gln) in organisms which lack glutaminyl-tRNA synthetase. The reaction takes place in the presence of glutamine and ATP through an activated gamma-phospho-Glu-tRNA(Gln). This chain is Glutamyl-tRNA(Gln) amidotransferase subunit A, found in Brachyspira hyodysenteriae (strain ATCC 49526 / WA1).